The following is a 43-amino-acid chain: Alpha-conotoxin-like Leo-A1 (43 aa).

Residues 1-26 constitute a propeptide that is removed on maturation; the sequence is LTLDRASDDTDVAAEIMSGLIALAID. Disulfide bonds link Cys28–Cys34 and Cys29–Cys42. The interval 30-32 is lacks the Ser-Xaa-Pro motif that is crucial for potent interaction with nAChR; sequence SDS.

Belongs to the conotoxin A superfamily. As to expression, expressed by the venom duct.

The protein localises to the secreted. Its function is as follows. Alpha-conotoxins act on postsynaptic membranes, they bind to the nicotinic acetylcholine receptors (nAChR) and thus inhibit them. Has possibly a distinct nAChR binding mode from other alpha-conotoxins, due to a different three residue motif (lacks the Ser-Xaa-Pro motif). This Conus leopardus (Leopard cone) protein is Alpha-conotoxin-like Leo-A1.